We begin with the raw amino-acid sequence, 647 residues long: Shugoshin-2 (647 aa).

S7 carries the post-translational modification Phosphoserine. 2 coiled-coil regions span residues 28–87 (SKAQ…FHEE) and 125–145 (DEES…HDVS). Residues 171–295 (REANVFSDTQ…DTVIQSTPTK (125 aa)) form a disordered region. The span at 200–210 (NLSNSKPVNNN) shows a compositional bias: low complexity. Residue S240 is modified to Phosphoserine. Polar residues-rich tracts occupy residues 242-253 (KSLSNKINNQAA) and 282-293 (RIQSDTVIQSTP). Position 292 is a phosphothreonine (T292). A phosphoserine mark is found at S332 and S335. Composition is skewed to polar residues over residues 375–396 (SLTS…NMTV) and 462–478 (EPPS…NNSP). Disordered regions lie at residues 375–416 (SLTS…DSSV), 453–486 (RNPP…SLQG), 522–579 (TNLK…ERKK), and 593–647 (RNFD…TLNL). Basic and acidic residues-rich tracts occupy residues 528-541 (NEND…SRRE) and 593-602 (RNFDLPSDHV). The segment covering 621–647 (KTETANITSEAPTTSEVTLENSETLNL) has biased composition (polar residues).

It belongs to the shugoshin family.

The protein localises to the chromosome. It localises to the centromere. Its function is as follows. Involved in chromosome cohesion during mitosis and meiosis by preventing premature dissociation of cohesin complex from centromeres after prophase, when most of cohesin complex dissociates from chromosomes arms. Required for faithful mitotic chromosome segregation and proper kinetochore orientation during meiosis I. In contrast to sgo1, it is dispensable for centromeric protection of rec8 during meiosis I as well as protection of rad21 during mitosis. Required to sense the lack of tension at centromeres during mitosis. The protein is Shugoshin-2 (sgo2) of Schizosaccharomyces pombe (strain 972 / ATCC 24843) (Fission yeast).